A 320-amino-acid polypeptide reads, in one-letter code: o-succinylbenzoate synthase (320 aa).

Lysine 133 (proton donor) is an active-site residue. Positions 161, 190, and 213 each coordinate Mg(2+). Lysine 235 serves as the catalytic Proton acceptor.

This sequence belongs to the mandelate racemase/muconate lactonizing enzyme family. MenC type 1 subfamily. It depends on a divalent metal cation as a cofactor.

It catalyses the reaction (1R,6R)-6-hydroxy-2-succinyl-cyclohexa-2,4-diene-1-carboxylate = 2-succinylbenzoate + H2O. The protein operates within quinol/quinone metabolism; 1,4-dihydroxy-2-naphthoate biosynthesis; 1,4-dihydroxy-2-naphthoate from chorismate: step 4/7. It functions in the pathway quinol/quinone metabolism; menaquinone biosynthesis. In terms of biological role, converts 2-succinyl-6-hydroxy-2,4-cyclohexadiene-1-carboxylate (SHCHC) to 2-succinylbenzoate (OSB). The chain is o-succinylbenzoate synthase from Salmonella newport (strain SL254).